Here is an 84-residue protein sequence, read N- to C-terminus: U-scoloptoxin(10)-Er1a (84 aa).

An N-terminal signal peptide occupies residues 1–24 (MSRFCLLFVAFGFVLYFLHMEVTG).

It belongs to the scoloptoxin-10 family. Post-translationally, contains 3 disulfide bonds. As to expression, expressed by the venom gland.

Its subcellular location is the secreted. This chain is U-scoloptoxin(10)-Er1a, found in Ethmostigmus rubripes (Giant centipede).